We begin with the raw amino-acid sequence, 161 residues long: MKYDTSELCDIYHEEVNVVEPLFSNFGGRTSFGGQITTVKCFEDNGLLFELLEENGRGRVLVIDGGGSVRRALINAELARLATQNEWEGIVVYGAVRQVDDLEEMDIGIQAMAAIPVGAASESIGESDIRVNFGGVTFFSGDHLYADNTGIILSEDPLDIE.

It belongs to the RraA family. As to quaternary structure, homotrimer. Binds to both RNA-binding sites in the C-terminal region of Rne and to RhlB.

The protein localises to the cytoplasm. In terms of biological role, globally modulates RNA abundance by binding to RNase E (Rne) and regulating its endonucleolytic activity. Can modulate Rne action in a substrate-dependent manner by altering the composition of the degradosome. Modulates RNA-binding and helicase activities of the degradosome. This is Regulator of ribonuclease activity A from Serratia proteamaculans (strain 568).